Consider the following 409-residue polypeptide: All trans-polyprenyl-diphosphate synthase PDSS1 (409 aa).

Residues lysine 128, arginine 131, and histidine 167 each contribute to the isopentenyl diphosphate site. 2 residues coordinate Mg(2+): aspartate 174 and aspartate 178. Arginine 184 provides a ligand contact to isopentenyl diphosphate.

It belongs to the FPP/GGPP synthase family. Heterotetramer composed of 2 PDSS1/DPS1 and 2 PDSS2/DLP1 subunits. Mg(2+) is required as a cofactor.

Its subcellular location is the mitochondrion. The catalysed reaction is 7 isopentenyl diphosphate + (2E,6E)-farnesyl diphosphate = all-trans-decaprenyl diphosphate + 7 diphosphate. It catalyses the reaction 6 isopentenyl diphosphate + (2E,6E)-farnesyl diphosphate = all-trans-nonaprenyl diphosphate + 6 diphosphate. Its pathway is cofactor biosynthesis; ubiquinone biosynthesis. In terms of biological role, heterotetrameric enzyme that catalyzes the condensation of farnesyl diphosphate (FPP), which acts as a primer, and isopentenyl diphosphate (IPP) to produce prenyl diphosphates of varying chain lengths and participates in the determination of the side chain of ubiquinone. Supplies nona and decaprenyl diphosphate, the precursors for the side chain of the isoprenoid quinones ubiquinone-9 (Q9)and ubiquinone-10 (Q10) respectively. The enzyme adds isopentenyl diphosphate molecules sequentially to farnesyl diphosphate with trans stereochemistry. This is All trans-polyprenyl-diphosphate synthase PDSS1 from Mus musculus (Mouse).